Here is a 641-residue protein sequence, read N- to C-terminus: Sodium-dependent nutrient amino acid transporter 1 (641 aa).

The disordered stretch occupies residues Met-1–Arg-36. The Cytoplasmic portion of the chain corresponds to Met-1 to Asn-38. The span at Ser-9 to Thr-24 shows a compositional bias: low complexity. Basic and acidic residues predominate over residues Glu-25–Glu-35. Helical transmembrane passes span Trp-39–Val-59, Gly-72–Leu-92, and Ser-109–Ile-129. Asn-183 and Asn-188 each carry an N-linked (GlcNAc...) asparagine glycan. A run of 9 helical transmembrane segments spans residues Pro-229 to Met-249, Ala-258 to Val-278, Ala-307 to Ser-327, Ile-341 to Leu-361, Leu-401 to Leu-421, Val-441 to Gly-461, Thr-474 to Leu-494, Cys-516 to Ile-536, and Ile-552 to Tyr-572.

It belongs to the sodium:neurotransmitter symporter (SNF) (TC 2.A.22) family.

The protein localises to the membrane. Functionally, unusual broad substrate spectrum amino acid:sodium cotransporter that promotes absorption of the D isomers of essential amino acids. Neutral amino acids are the preferred substrates, especially methionine and phenylalanine. The polypeptide is Sodium-dependent nutrient amino acid transporter 1 (Drosophila erecta (Fruit fly)).